We begin with the raw amino-acid sequence, 226 residues long: Ribose-5-phosphate isomerase A (226 aa).

Residues Thr-25–Thr-28, Asp-81–Asp-84, and Lys-94–Gly-97 contribute to the substrate site. Residue Glu-103 is the Proton acceptor of the active site. Lys-121 is a binding site for substrate.

It belongs to the ribose 5-phosphate isomerase family. Homodimer.

It carries out the reaction aldehydo-D-ribose 5-phosphate = D-ribulose 5-phosphate. It functions in the pathway carbohydrate degradation; pentose phosphate pathway; D-ribose 5-phosphate from D-ribulose 5-phosphate (non-oxidative stage): step 1/1. In terms of biological role, catalyzes the reversible conversion of ribose-5-phosphate to ribulose 5-phosphate. The protein is Ribose-5-phosphate isomerase A of Enterococcus faecalis (strain ATCC 700802 / V583).